The chain runs to 293 residues: Shikimate dehydrogenase (NADP(+)) (293 aa).

Shikimate-binding positions include 20–22 and T72; that span reads SLT. K76 (proton acceptor) is an active-site residue. Shikimate is bound by residues N97 and D112. NADP(+)-binding positions include 136-140 and I230; that span reads GAGGA. Y232 serves as a coordination point for shikimate. Position 253 (G253) interacts with NADP(+).

The protein belongs to the shikimate dehydrogenase family. As to quaternary structure, homodimer.

The enzyme catalyses shikimate + NADP(+) = 3-dehydroshikimate + NADPH + H(+). The protein operates within metabolic intermediate biosynthesis; chorismate biosynthesis; chorismate from D-erythrose 4-phosphate and phosphoenolpyruvate: step 4/7. Involved in the biosynthesis of the chorismate, which leads to the biosynthesis of aromatic amino acids. Catalyzes the reversible NADPH linked reduction of 3-dehydroshikimate (DHSA) to yield shikimate (SA). This is Shikimate dehydrogenase (NADP(+)) from Arthrobacter sp. (strain FB24).